Here is a 510-residue protein sequence, read N- to C-terminus: GPI mannosyltransferase 4 (510 aa).

3 consecutive transmembrane segments (helical) span residues L7–H27, F62–G82, and A89–L109. An N-linked (GlcNAc...) asparagine glycan is attached at N142. Residues L179–V199 form a helical membrane-spanning segment. N212 carries N-linked (GlcNAc...) asparagine glycosylation. A run of 3 helical transmembrane segments spans residues I213–V233, L268–T288, and F339–G359.

Belongs to the glycosyltransferase 22 family. PIGZ subfamily.

The protein resides in the endoplasmic reticulum membrane. Its pathway is glycolipid biosynthesis; glycosylphosphatidylinositol-anchor biosynthesis. Alpha-1,2-mannosyltransferase involved in glycosylphosphatidylinositol-anchor biosynthesis. Transfers a fourth mannose to trimannosyl-GPIs during GPI precursor assembly. The presence of a fourth mannose in GPI is essential in fungi. This is GPI mannosyltransferase 4 (SMP3) from Yarrowia lipolytica (strain CLIB 122 / E 150) (Yeast).